Consider the following 163-residue polypeptide: uncharacterized protein (163 aa).

This is an uncharacterized protein from Schizosaccharomyces pombe (strain 972 / ATCC 24843) (Fission yeast).